Here is a 187-residue protein sequence, read N- to C-terminus: Elongation factor P (187 aa).

Belongs to the elongation factor P family.

The protein localises to the cytoplasm. Its pathway is protein biosynthesis; polypeptide chain elongation. In terms of biological role, involved in peptide bond synthesis. Stimulates efficient translation and peptide-bond synthesis on native or reconstituted 70S ribosomes in vitro. Probably functions indirectly by altering the affinity of the ribosome for aminoacyl-tRNA, thus increasing their reactivity as acceptors for peptidyl transferase. The polypeptide is Elongation factor P (Bifidobacterium animalis subsp. lactis (strain AD011)).